We begin with the raw amino-acid sequence, 100 residues long: Small ribosomal subunit protein uS14c (100 aa).

This sequence belongs to the universal ribosomal protein uS14 family. Part of the 30S ribosomal subunit.

It is found in the plastid. The protein localises to the chloroplast. In terms of biological role, binds 16S rRNA, required for the assembly of 30S particles. The protein is Small ribosomal subunit protein uS14c of Chlamydomonas reinhardtii (Chlamydomonas smithii).